The primary structure comprises 285 residues: Polyamine aminopropyltransferase (285 aa).

The PABS domain occupies 5–241 (DSWFTEHFQA…GWWSVTLSSK (237 aa)). An S-methyl-5'-thioadenosine-binding site is contributed by glutamine 35. Residues histidine 66 and aspartate 90 each coordinate spermidine. S-methyl-5'-thioadenosine contacts are provided by residues aspartate 110 and 141-142 (DG). Residue aspartate 160 is the Proton acceptor of the active site. A spermidine-binding site is contributed by 160-163 (DSTD). Proline 167 serves as a coordination point for S-methyl-5'-thioadenosine.

The protein belongs to the spermidine/spermine synthase family. As to quaternary structure, homodimer or homotetramer.

The protein resides in the cytoplasm. It catalyses the reaction S-adenosyl 3-(methylsulfanyl)propylamine + putrescine = S-methyl-5'-thioadenosine + spermidine + H(+). Its pathway is amine and polyamine biosynthesis; spermidine biosynthesis; spermidine from putrescine: step 1/1. Catalyzes the irreversible transfer of a propylamine group from the amino donor S-adenosylmethioninamine (decarboxy-AdoMet) to putrescine (1,4-diaminobutane) to yield spermidine. The protein is Polyamine aminopropyltransferase of Xylella fastidiosa (strain 9a5c).